A 226-amino-acid polypeptide reads, in one-letter code: PKHD-type hydroxylase BP3529 (226 aa).

A Fe2OG dioxygenase domain is found at 78–178 (KIFPPLFNRY…RISAFFWLQS (101 aa)). Positions 96, 98, and 159 each coordinate Fe cation. Arginine 169 lines the 2-oxoglutarate pocket.

Requires Fe(2+) as cofactor. L-ascorbate serves as cofactor.

The protein is PKHD-type hydroxylase BP3529 of Bordetella pertussis (strain Tohama I / ATCC BAA-589 / NCTC 13251).